A 416-amino-acid chain; its full sequence is Enterobactin exporter EntS (416 aa).

Topologically, residues 1–21 (MNRQSWLLNLSLLKTHPAFRA) are cytoplasmic. Residues 22 to 42 (VFLARFISIVSLGLLGVAVPV) traverse the membrane as a helical segment. The Periplasmic portion of the chain corresponds to 43-55 (QIQMMTHSTWQVG). Residues 56–76 (LSVTLTGSAMFVGLMVGGVLA) form a helical membrane-spanning segment. At 77–83 (DRYERKK) the chain is on the cytoplasmic side. The helical transmembrane segment at 84–104 (VILLARGTCGIGFIGLCLNAL) threads the bilayer. Residues 105-109 (LPEPS) lie on the Periplasmic side of the membrane. Residues 110–130 (LLAIYLLGLWDGFFASLGVTA) traverse the membrane as a helical segment. Over 131 to 156 (LLAATPALVGRENLMQAGAITMLTVR) the chain is Cytoplasmic. A helical membrane pass occupies residues 157–177 (LGSVISPMLGGVLLATGGVAW). Residue Asn178 is a topological domain, periplasmic. Residues 179–199 (YGLAAAGTFITLLPLLSLPAL) form a helical membrane-spanning segment. Residues 200-218 (PPPPQPREHPLKSLLAAFR) lie on the Cytoplasmic side of the membrane. Residues 219-239 (FLLSSPLIGGIALLGGLLTMA) traverse the membrane as a helical segment. The Periplasmic segment spans residues 240 to 256 (SAVRVLYPALAINWHMS). A helical transmembrane segment spans residues 257-277 (AAQIGLLYAAIPLGAAVGALT). Residues 278–287 (SGQLAHSVRP) are Cytoplasmic-facing. A helical transmembrane segment spans residues 288–307 (GLLMLVSTVGSFLAIGVFGL). Residues 308 to 313 (MPVWLL) are Periplasmic-facing. The chain crosses the membrane as a helical span at residues 314–336 (GVICLALFGWLSAISSLLQYTLL). Over 337 to 356 (QTQTPEAMLGRINGLWTAQN) the chain is Cytoplasmic. The chain crosses the membrane as a helical span at residues 357–377 (VTGDAIGAALLGGLGAMMTPV). Residue Ala378 is a topological domain, periplasmic. A helical transmembrane segment spans residues 379–399 (SASVSGFGLVIVGLLLMLLLG). The Cytoplasmic portion of the chain corresponds to 400 to 416 (ELRRFRQPPPVPDGAPL).

This sequence belongs to the major facilitator superfamily. EntS (TC 2.A.1.38) family.

The protein localises to the cell inner membrane. Functionally, component of an export pathway for enterobactin. This is Enterobactin exporter EntS from Citrobacter koseri (strain ATCC BAA-895 / CDC 4225-83 / SGSC4696).